A 514-amino-acid polypeptide reads, in one-letter code: Cytochrome P450 monooxygenase FUS8 (514 aa).

The chain crosses the membrane as a helical span at residues 24 to 44 (VFENLTVTNTVCAFIALFIIV). N-linked (GlcNAc...) asparagine glycans are attached at residues asparagine 225 and asparagine 443. Cysteine 460 is a heme binding site.

It belongs to the cytochrome P450 family. Requires heme as cofactor.

The protein resides in the membrane. Its pathway is mycotoxin biosynthesis. Its function is as follows. Cytochrome P450 monooxygenase; part of the gene cluster that mediates the biosynthesis of the mycotoxin fusarin C. Within the cluster, FUS1, FUS2, FUS8 and FUS9 are sufficient for fusarin production. The roles of the other FUS members are yet undetermined. The fusarin C synthetase FUS1 is responsible for the condensation of one acetyl-coenzyme A (CoA) unit with six malonyl-CoA units and the amide linkage of the arising heptaketide and homoserine, subsequently releasing the first intermediate, prefusarin, as an alcohol with an open ring structure. The cytochrome P450 monooxygenase FUS8 participates in multiple oxidation processes at carbon C-20 and is able to use the FUS1 product as substrate, resulting in formation of 20-hydroxy-prefusarin. This reaction seems to be essential before the 2-pyrrolidone ring closure can be catalyzed by FUS2, generating 20-hydroxy-fusarin. FUS8 is able to further oxidizes carbon C-20 after ring closure, resulting in the formation of carboxy-fusarin C. As the last step, FUS9 methylates the hydroxyl group at C-21 to generate fusarin C. Fusarin C can then rearrange to epi-fusarin C, the (z)-isomers, and fusarin A and fusarin D. The chain is Cytochrome P450 monooxygenase FUS8 from Gibberella fujikuroi (strain CBS 195.34 / IMI 58289 / NRRL A-6831) (Bakanae and foot rot disease fungus).